A 259-amino-acid chain; its full sequence is Undecaprenyl-diphosphatase 4 (259 aa).

Transmembrane regions (helical) follow at residues M1 to I21, A39 to Y59, F71 to L91, I99 to M119, I133 to I153, A173 to F193, S208 to I228, and F239 to F259.

The protein belongs to the UppP family.

The protein localises to the cell membrane. The enzyme catalyses di-trans,octa-cis-undecaprenyl diphosphate + H2O = di-trans,octa-cis-undecaprenyl phosphate + phosphate + H(+). Catalyzes the dephosphorylation of undecaprenyl diphosphate (UPP). Confers resistance to bacitracin. The sequence is that of Undecaprenyl-diphosphatase 4 from Bacillus thuringiensis (strain Al Hakam).